The following is a 1212-amino-acid chain: Probable serine/threonine-protein kinase DDB_G0284491 (1212 aa).

A helical membrane pass occupies residues 197–217 (LFHSFSLLNLYVYLIIVIRII). N-linked (GlcNAc...) asparagine glycosylation is found at N229, N299, N309, N328, N335, N341, N344, N391, N419, N422, N426, N427, N435, and N499. Residues 288-329 (LNNNNDNNLNNNNSNNNLNNNNNSNSNFNNDNNLNSNINSND) are disordered. Disordered stretches follow at residues 412-439 (GNSNSGSNNSNSSNNNSSSNSLINNSGG) and 489-517 (IIKNNNNNNNNNSNNNNNNNDEDDSDYEE). Low complexity predominate over residues 489-507 (IIKNNNNNNNNNSNNNNNN). Acidic residues predominate over residues 508-517 (NDEDDSDYEE). The helical transmembrane segment at 673 to 693 (IQIFDDYSLIIALRLLMNFIL) threads the bilayer. The segment covering 703-720 (VPPPPTQPSSRPQSPPTV) has biased composition (pro residues). Disordered stretches follow at residues 703–733 (VPPPPTQPSSRPQSPPTVSPLTPLNNHHHSG) and 751–813 (EVVS…NNNN). A Protein kinase domain is found at 865–1182 (ETEIEPFASG…EVYNDLQDIY (318 aa)). Residues 871-879 (FASGGQANI) and K924 each bind ATP. The Proton acceptor role is filled by D1035.

Belongs to the protein kinase superfamily. Ser/Thr protein kinase family.

The protein resides in the membrane. The enzyme catalyses L-seryl-[protein] + ATP = O-phospho-L-seryl-[protein] + ADP + H(+). It carries out the reaction L-threonyl-[protein] + ATP = O-phospho-L-threonyl-[protein] + ADP + H(+). In Dictyostelium discoideum (Social amoeba), this protein is Probable serine/threonine-protein kinase DDB_G0284491.